We begin with the raw amino-acid sequence, 333 residues long: Cap-specific mRNA (nucleoside-2'-O-)-methyltransferase (333 aa).

Residue Y22 coordinates mRNA. 8 residues coordinate S-adenosyl-L-methionine: Q39, Y66, G68, G72, D95, R97, V116, and D138. The binding to NPH-I stretch occupies residues P169 to V249. The binding to Rap94 stretch occupies residues P169–K333. K175 functions as the For methyltransferase activity in the catalytic mechanism. MRNA-binding positions include R177 to F180, D182, S205 to E207, and E233. Positions S305–K333 are disordered. Positions R311–N322 are enriched in low complexity. Residues R323–K333 are compositionally biased toward basic residues.

Belongs to the class I-like SAM-binding methyltransferase superfamily. Poxvirus/kinetoplastid 2'-O-MTase family. Interacts with poly(A) polymerase catalytic subunit OPG063. Interacts with OPG109 and OPG123; these interactions might help linking transcription to capping and polyadenylation.

It localises to the virion. The enzyme catalyses a 5'-end (N(7)-methyl 5'-triphosphoguanosine)-ribonucleoside in mRNA + S-adenosyl-L-methionine = a 5'-end (N(7)-methyl 5'-triphosphoguanosine)-(2'-O-methyl-ribonucleoside) in mRNA + S-adenosyl-L-homocysteine + H(+). Displays methyltransferase, positive regulation of the poly(A) polymerase and transcription elongation activities. Involved in the modification of both mRNA ends and in intermediate and late gene positive transcription elongation. At the mRNAs 5' end, methylates the ribose 2' OH group of the first transcribed nucleotide, thereby producing a 2'-O-methylpurine cap. At the 3' end, functions as a processivity factor which stimulates the activity of the viral poly(A) polymerase OPG063 that creates mRNA's poly(A) tail. In the presence of OPG102, OPG063 does not dissociate from the RNA allowing tail elongation to around 250 adenylates. The sequence is that of Cap-specific mRNA (nucleoside-2'-O-)-methyltransferase (OPG102) from Vaccinia virus (strain Western Reserve) (VACV).